Consider the following 497-residue polypeptide: UPF0371 protein cu0538 (497 aa).

The protein belongs to the UPF0371 family.

In Corynebacterium urealyticum (strain ATCC 43042 / DSM 7109), this protein is UPF0371 protein cu0538.